The sequence spans 235 residues: Small ribosomal subunit protein eS4 (235 aa).

An S4 RNA-binding domain is found at 38–101 (IPLLVLVRDF…EKSYRILFDE (64 aa)).

This sequence belongs to the eukaryotic ribosomal protein eS4 family.

In Archaeoglobus fulgidus (strain ATCC 49558 / DSM 4304 / JCM 9628 / NBRC 100126 / VC-16), this protein is Small ribosomal subunit protein eS4 (rps4e).